Consider the following 402-residue polypeptide: MRPERGYVLCDPCLGRLFGSGNILHCEKRGRIIRGKGRDRPSECHICKGLCPSLEESCGPSLWGAAAYEFETFVVGVRLKSSMAERDDEVRSRCRLAGAAALRAYVAAMLSSYLGAMTGASVDHGAPELSITADLRDNTAEFHPRPVVLSGRYTKSVRGLSQKGAPCGGCAGEGCTSCGMLGVDTGGSVEGVISGHACGTYSARRASFTWVGGEDQESLVGGRGRPFVAQLVQPHRRGLVHPATVRLGGVVLHGLREVRSMPQLPVRFRSKVRLAVSAKGEISDDTLGRLADLGGSTLAVYEGRRRVERAIHSASHSRTGPGSFELHMEVDGGVPFKRFVSGETVFPNLSDLLGTVCSCGGFDFEEITVERGGHPGARGGTRRRPRKGPARPAGGRDRPRKT.

The active-site Nucleophile is aspartate 215. The disordered stretch occupies residues 370–402; the sequence is ERGGHPGARGGTRRRPRKGPARPAGGRDRPRKT. The segment covering 380–389 has biased composition (basic residues); it reads GTRRRPRKGP.

This sequence belongs to the pseudouridine synthase Pus10 family.

The enzyme catalyses uridine(54) in tRNA = pseudouridine(54) in tRNA. It carries out the reaction uridine(55) in tRNA = pseudouridine(55) in tRNA. Its function is as follows. Responsible for synthesis of pseudouridine from uracil-54 and uracil-55 in the psi GC loop of transfer RNAs. In Cenarchaeum symbiosum (strain A), this protein is tRNA pseudouridine synthase Pus10.